The following is a 322-amino-acid chain: Probable heme-iron transport system permease protein IsdF (322 aa).

9 helical membrane-spanning segments follow: residues 9-29 (LLFL…FVTG), 61-81 (ILIA…LQAA), 89-109 (ANII…MLFI), 114-134 (FYLP…IILL), 143-163 (VSMI…LEIL), 179-199 (IWSD…LTLL), 233-253 (VFLA…GIIV), 267-287 (VLIP…DLLG), and 294-314 (LEIP…IYLI).

This sequence belongs to the binding-protein-dependent transport system permease family. FecCD subfamily.

It is found in the cell membrane. Part of the binding-protein-dependent transport system for heme-iron. Responsible for the translocation of the substrate across the membrane. The sequence is that of Probable heme-iron transport system permease protein IsdF (isdF) from Staphylococcus aureus (strain MSSA476).